Reading from the N-terminus, the 104-residue chain is Urease subunit beta (104 aa).

The protein belongs to the urease beta subunit family. In terms of assembly, heterotrimer of UreA (gamma), UreB (beta) and UreC (alpha) subunits. Three heterotrimers associate to form the active enzyme.

The protein localises to the cytoplasm. It carries out the reaction urea + 2 H2O + H(+) = hydrogencarbonate + 2 NH4(+). It functions in the pathway nitrogen metabolism; urea degradation; CO(2) and NH(3) from urea (urease route): step 1/1. This Methylocella silvestris (strain DSM 15510 / CIP 108128 / LMG 27833 / NCIMB 13906 / BL2) protein is Urease subunit beta.